A 249-amino-acid polypeptide reads, in one-letter code: ATP synthase subunit a, chloroplastic (249 aa).

A run of 5 helical transmembrane segments spans residues 40–60, 97–117, 136–156, 201–221, and 222–242; these read QVLI…VLVV, VPFI…GALL, INTT…AGLS, LVVV…VMFL, and GLFT…AYIG.

It belongs to the ATPase A chain family. As to quaternary structure, F-type ATPases have 2 components, CF(1) - the catalytic core - and CF(0) - the membrane proton channel. CF(1) has five subunits: alpha(3), beta(3), gamma(1), delta(1), epsilon(1). CF(0) has four main subunits: a, b, b' and c.

Its subcellular location is the plastid. The protein resides in the chloroplast thylakoid membrane. Its function is as follows. Key component of the proton channel; it plays a direct role in the translocation of protons across the membrane. This chain is ATP synthase subunit a, chloroplastic, found in Aethionema grandiflorum (Persian stone-cress).